The following is a 502-amino-acid chain: 2-isopropylmalate synthase (502 aa).

Aspartate 1, histidine 189, histidine 191, and asparagine 225 together coordinate Mn(2+). One can recognise a Pyruvate carboxyltransferase domain in the interval 1–254 (DGEQALQASL…STNINYKEIY (254 aa)). The regulatory domain stretch occupies residues 379–502 (CLKFFSVQSI…VNKKLQELKK (124 aa)).

This sequence belongs to the alpha-IPM synthase/homocitrate synthase family. LeuA type 1 subfamily. In terms of assembly, homodimer. Mn(2+) serves as cofactor.

Its subcellular location is the cytoplasm. The enzyme catalyses 3-methyl-2-oxobutanoate + acetyl-CoA + H2O = (2S)-2-isopropylmalate + CoA + H(+). The protein operates within amino-acid biosynthesis; L-leucine biosynthesis; L-leucine from 3-methyl-2-oxobutanoate: step 1/4. Catalyzes the condensation of the acetyl group of acetyl-CoA with 3-methyl-2-oxobutanoate (2-ketoisovalerate) to form 3-carboxy-3-hydroxy-4-methylpentanoate (2-isopropylmalate). The polypeptide is 2-isopropylmalate synthase (Buchnera aphidicola subsp. Macrosiphoniella ludovicianae).